A 920-amino-acid polypeptide reads, in one-letter code: Nonribosomal peptide synthetase atrA (920 aa).

The adenylation (A) domain stretch occupies residues 13-428 (AAAQERCGRV…AGRLKETMII (416 aa)). The 80-residue stretch at 558 to 637 (PPKDELERSL…ELSAALHDLQ (80 aa)) folds into the Carrier domain. S595 bears the O-(pantetheine 4'-phosphoryl)serine mark. The segment at 656–905 (PLWLIHPGVG…YTMLAPEHVF (250 aa)) is thioesterase (TE) domain.

The protein belongs to the NRP synthetase family.

The enzyme catalyses 2 3-(4-hydroxyphenyl)pyruvate + 2 ATP = atromentin + 2 AMP + 2 diphosphate + H(+). In terms of biological role, nonribosomal peptide synthetase that mediates the biosynthesis of atromentin. AtrA first activates 4-hydroxyphenylpyruvate (HPPA) through its A domain to AMP-HPPA. The HPPA unit is then loaded to the T domain and eventually transferred to the TE domain. Another HPPA unit is then loaded onto the T domain. The TE domain then catalyzes the condensation of the two HPPA units and the release of atromentin via cyclization. The chain is Nonribosomal peptide synthetase atrA from Aspergillus terreus (strain NIH 2624 / FGSC A1156).